The following is a 256-amino-acid chain: METYVNKLHEGSIYTAAVQYNVIEKDDDPASLTIWVPMFQSSISADMLIKELINVNILVRQISTPKGPSLKIMINSRSAVLAQMPSKFTISANVSLDERSKLAYDITTPCEIKACSLTCLKVKNMLTTVKDLTMKTFNPTHEIIALCEFENIMTSKRVVIPTFLRSINVKAKDLDSLENIATTEFKNAITNAKIIPYAGLVLVITVTDNKGAFKYIKPQSQFIVDLGAYLEKESIYYVTTNWKHTATKFSIKPIED.

Positions 1-110 are interaction with M2-1; sequence METYVNKLHE…KLAYDITTPC (110 aa). Residues 110-183 form a nuclear targeting and binding to host importin KPNB1 region; the sequence is CEIKACSLTC…LDSLENIATT (74 aa). The Nuclear export signal motif lies at 194–206; it reads IIPYAGLVLVITV. Phosphothreonine is present on T205.

This sequence belongs to the pneumovirinae M protein family. In terms of assembly, forms dimers. Forms higher-order oligomers. Interacts with glycoprotein G (via N-terminus). Interacts with protein M2-1; this interaction directs the matrix protein localization to cytoplasmic inclusions comprising viral proteins L, N, P, and M2-1 and mediates the matrix protein association with the nucleocapsid. Interacts with host KPNB1; this interaction mediates nuclear import of the matrix protein early during infection. Post-translationally, phosphorylation is important for oligomerization.

It is found in the virion. Its subcellular location is the host cytoplasm. The protein resides in the host nucleus. It localises to the host cell membrane. Its function is as follows. Plays a crucial role in virus assembly into filaments and budding. Early in infection, localizes in the nucleus where it may inhibit host cell transcription. Later in infection, traffics to the cytoplasm through the action of host CRM1 to associate with inclusion bodies, the site of viral transcription and replication. During virus assembly and budding, acts as a bridge between the nucleocapsid and the lipid bilayer. The protein is Matrix protein (M) of Bos taurus (Bovine).